The following is a 693-amino-acid chain: MESSVATHWLSAFVILCSFITTQSLNNKIHEHMTIDELRNVFHVEHHSRVPEYHLVQLTHHLARRNIPTSHPANSNSADSGKTPHLKTEKVTKGGYKAPSLLNDEMFVEAKKRIEDVDIMGDPNSTVSVDFKVQSSEFGDSESLSDKEHSAESQEDGVHKIDLEAFGRQLKLVLKKQEGLIKKDGLKVWKALKNETQPHGVDYEEMITEDDEEFGDLYQDEENGAALLIRRHPKHGKLVVEGSIGHDLVIRPIPDTMTSPAQDDEMFMDPSSMADMVSIDTGLPIMKRKKEEQDRLQEALNGAQHVIIKRDPAEVDHMSDYAFMEPDHIGKRYRRKRSAEAHNRQKREAPYVIYPEILVIVDYDGYRLHGGDNVQIKRYFVSFWNGVDLRYKLLKGPRIRISIAGIIISRGRDATPYLERNRVGRDAIDSAAALTDMGKYLFRERRLPVYDIAVAITKLDMCRRQYANDACNRGTAGFAYVGGACVVNKRLEKVNSVAIIEDTGGFSGIIVAAHEVGHLLGAVHDGSPPPSYLGGPGAEKCRWEDGFIMSDLRHTEKGFRWSPCSVQSFHHFLNGDTATCLYNSPHEDDSLPRVLPGRLLTLDAQCRKDRGTSACFKDERVCAQLFCFDAGSGYCVAYRPAAEGSPCGDGQYCINGQCITEHENIIPDYSQHTPSYVRPETSPFYANITSSRH.

An N-terminal signal peptide occupies residues 1–24; it reads MESSVATHWLSAFVILCSFITTQS. Positions 67-80 are enriched in polar residues; the sequence is IPTSHPANSNSADS. Residues 67–91 are disordered; the sequence is IPTSHPANSNSADSGKTPHLKTEKV. N-linked (GlcNAc...) asparagine glycosylation is found at N124 and N194. Positions 353–585 constitute a Peptidase M12B domain; the sequence is IYPEILVIVD…DTATCLYNSP (233 aa). 2 disulfides stabilise this stretch: C485/C580 and C541/C564. H514 provides a ligand contact to Zn(2+). The Metal-binding signature appears at 514-525; sequence HEVGHLLGAVHD. The active site involves E515. Zn(2+)-binding residues include H518 and H524. An N-linked (GlcNAc...) asparagine glycan is attached at N687.

Requires Zn(2+) as cofactor.

It is found in the secreted. The protein localises to the extracellular space. Its subcellular location is the extracellular matrix. Functionally, involved in larval molting and metamorphosis. May degrade extracellular matrix (ECM) and basement membrane (BM) during the development of organs to allow degeneration and remodeling of tissues. In Bombyx mori (Silk moth), this protein is A disintegrin and metalloproteinase with thrombospondin motifs like.